Reading from the N-terminus, the 520-residue chain is 2-isopropylmalate synthase (520 aa).

Residues 12-274 (VVIFDTTLRD…DTGIDTTMLT (263 aa)) enclose the Pyruvate carboxyltransferase domain. Residues aspartate 21, histidine 209, histidine 211, and asparagine 245 each coordinate Mn(2+). The regulatory domain stretch occupies residues 398–520 (KLLSLSVIAG…RLHAQHAAVV (123 aa)).

Belongs to the alpha-IPM synthase/homocitrate synthase family. LeuA type 1 subfamily. Homodimer. Mn(2+) is required as a cofactor.

It localises to the cytoplasm. The catalysed reaction is 3-methyl-2-oxobutanoate + acetyl-CoA + H2O = (2S)-2-isopropylmalate + CoA + H(+). It participates in amino-acid biosynthesis; L-leucine biosynthesis; L-leucine from 3-methyl-2-oxobutanoate: step 1/4. Catalyzes the condensation of the acetyl group of acetyl-CoA with 3-methyl-2-oxobutanoate (2-ketoisovalerate) to form 3-carboxy-3-hydroxy-4-methylpentanoate (2-isopropylmalate). In Methylorubrum populi (strain ATCC BAA-705 / NCIMB 13946 / BJ001) (Methylobacterium populi), this protein is 2-isopropylmalate synthase.